The chain runs to 619 residues: 4-hydroxyphenylalkanoate adenylyltransferase (619 aa).

This sequence belongs to the ATP-dependent AMP-binding enzyme family.

It carries out the reaction 17-(4-hydroxyphenyl)heptadecanoate + holo-[(phenol)carboxyphthiodiolenone synthase] + ATP = 17-(4-hydroxyphenyl)heptadecanoyl-[(phenol)carboxyphthiodiolenone synthase] + AMP + diphosphate. The catalysed reaction is 19-(4-hydroxyphenyl)nonadecanoate + holo-[(phenol)carboxyphthiodiolenone synthase] + ATP = 19-(4-hydroxyphenyl)nonadecanoyl-[(phenol)carboxyphthiodiolenone synthase] + AMP + diphosphate. It functions in the pathway lipid metabolism; fatty acid biosynthesis. Functionally, catalyzes the activation of long-chain fatty acids as acyl-adenylates (acyl-AMP), which are then transferred to the multifunctional polyketide synthase PpsA for further chain extension. Involved in the biosynthesis of phenolphthiocerol, which is an important intermediate in the biosynthesis of phenolic glycolipid (PGL), also called mycosid B. This Mycobacterium bovis (strain ATCC BAA-935 / AF2122/97) protein is 4-hydroxyphenylalkanoate adenylyltransferase (fadD29).